The following is a 443-amino-acid chain: KH domain-containing, RNA-binding, signal transduction-associated protein 1 (443 aa).

Residues 1–95 (MQRRDDPAAR…LLPPSATAAA (95 aa)) form a disordered region. S18 and S20 each carry phosphoserine. K21 carries the post-translational modification N6-acetyllysine. Position 29 is a phosphoserine (S29). At T33 the chain carries Phosphothreonine. 2 positions are modified to asymmetric dimethylarginine; by PRMT1: R45 and R52. S58 is subject to Phosphoserine. The segment covering 61–72 (TQPPPLLPPSNP) has biased composition (pro residues). Over residues 81-95 (SAPTPLLPPSATAAA) the composition is skewed to low complexity. T84 carries the phosphothreonine; by MAPK1 modification. Glycyl lysine isopeptide (Lys-Gly) (interchain with G-Cter in SUMO2) cross-links involve residues K96 and K102. Positions 100–260 (ENKYLPELMA…VKKFLVPDMM (161 aa)) are involved in homodimerization. A Phosphoserine modification is found at S113. A Glycyl lysine isopeptide (Lys-Gly) (interchain with G-Cter in SUMO2) cross-link involves residue K139. S150 is subject to Phosphoserine. Positions 171-197 (NFVGKILGPQGNTIKRLQEETGAKISV) constitute a KH domain. Residue K175 is modified to N6-acetyllysine; alternate. K175 participates in a covalent cross-link: Glycyl lysine isopeptide (Lys-Gly) (interchain with G-Cter in SUMO2); alternate. T183 bears the Phosphothreonine mark. Residues 280–317 (PSRGRGVSVRGRGAAPPPPPVPRGRGVGPPRGALVRGT) form a disordered region. 3 positions are modified to omega-N-methylarginine: R282, R284, and R291. A compositionally biased stretch (low complexity) spans 283–293 (GRGVSVRGRGA). At R304 the chain carries Asymmetric dimethylarginine; by PRMT1. Positions 307-316 (GPPRGALVRG) are enriched in low complexity. Omega-N-methylarginine; by PRMT1 is present on residues R310 and R315. The residue at position 320 (R320) is a Dimethylated arginine; alternate. R320 bears the Omega-N-methylarginine; by PRMT1; alternate mark. R325 bears the Omega-N-methylarginine; by PRMT1 mark. The disordered stretch occupies residues 326 to 345 (GATVTRGVPPPPTVRGAPTP). Dimethylated arginine; alternate is present on residues R331 and R340. Omega-N-methylarginine; by PRMT1; alternate occurs at positions 331 and 340. An Asymmetric dimethylarginine; alternate modification is found at R331. The interaction with HNRNPA1 stretch occupies residues 351–443 (GIQRIPLPPT…AYREHPYGRY (93 aa)). Y387 bears the Phosphotyrosine mark. Residue S390 is modified to Phosphoserine. The interaction with ZBTB7A stretch occupies residues 400–420 (GHGELQDSYEAYGQDDWNGTR). The tract at residues 411–443 (YGQDDWNGTRPSLKAPPARPVKGAYREHPYGRY) is disordered. K432 participates in a covalent cross-link: Glycyl lysine isopeptide (Lys-Gly) (interchain with G-Cter in SUMO2). Basic and acidic residues predominate over residues 434 to 443 (AYREHPYGRY). A phosphotyrosine; by PTK6 mark is found at Y435, Y440, and Y443.

This sequence belongs to the KHDRBS family. As to quaternary structure, self-associates to form homooligomers when bound to RNA, oligomerization appears to be limited when binding to proteins. Interacts with KHDRBS3/SLIM-2. Forms a trimeric complex in the nucleus consisting of BANP, HDAC6 and KHDRBS1/SAM68; HDAC6 keeps KHDRBS1 in a deacetylated state which inhibits the inclusion of CD44 alternate exons. The complex is disrupted by MAPK1/MAPK3-mediated phosphorylation of BANP which results in BANP export to the cytoplasm. This facilitates acetylation of KHDRBS1 and CD44 variant exon inclusion. Interacts with KHDRBS2/SLIM-1; heterooligomer formation of KHDRBS family proteins may modulate RNA substrate specificity. Interacts with PIK3R1, PLCG1. Interacts with RASA1, GRB2, SRC, CBP, PRMT1, APC, HNRNPA1. Interacts with PTK6 (via SH3 and SH2 domains). Forms a complex with ILF2, ILF3, YLPM1, RBMX, NCOA5 and PPP1CA. Binds WBP4/FBP21 (via WW domains), FNBP4/FBP30 (via WW domains). Interacts (via Arg/Gly-rich-flanked Pro-rich regions) with FYN (via the SH3 domain). Interacts with the non-receptor tyrosine kinase SRMS; the interaction leads to phosphorylation of KHDRBS1. Interacts with ZBTB7A; negatively regulates KHDRBS1 splicing activity toward BCL2L1. Tyrosine phosphorylated by several non-receptor tyrosine kinases including LCK, FYN and JAK3. Also tyrosine phosphorylated by the non-receptor tyrosine kinase SRMS in an EGF-dependent manner. Phosphorylation by PTK6 negatively regulates its RNA binding ability. Phosphorylation by PTK6 at Tyr-440 dictates the nuclear localization of KHDRBS1. In terms of processing, acetylated. Positively correlates with ability to bind RNA. Deacetylated by HDAC6; this regulates alternative splicing by inhibiting the inclusion of CD44 alternate exons. Post-translationally, arginine methylation is required for nuclear localization, Inhibits interaction with Src-like SH3 domains, but not interaction with WW domains of WBP4/FBP21 and FNBP4/FBP30.

It localises to the nucleus. The protein localises to the cytoplasm. The protein resides in the membrane. Functionally, recruited and tyrosine phosphorylated by several receptor systems, for example the T-cell, leptin and insulin receptors. Once phosphorylated, functions as an adapter protein in signal transduction cascades by binding to SH2 and SH3 domain-containing proteins. Role in G2-M progression in the cell cycle. Represses CBP-dependent transcriptional activation apparently by competing with other nuclear factors for binding to CBP. Also acts as a putative regulator of mRNA stability and/or translation rates and mediates mRNA nuclear export. Positively regulates the association of constitutive transport element (CTE)-containing mRNA with large polyribosomes and translation initiation. May not be involved in the nucleocytoplasmic export of unspliced (CTE)-containing RNA species. RNA-binding protein that plays a role in the regulation of alternative splicing and influences mRNA splice site selection and exon inclusion. Binds to RNA containing 5'-[AU]UAA-3' as a bipartite motif spaced by more than 15 nucleotides. Binds poly(A). Can regulate CD44 alternative splicing in a Ras pathway-dependent manner. In cooperation with HNRNPA1 modulates alternative splicing of BCL2L1 by promoting splicing toward isoform Bcl-X(S), and of SMN1. Can regulate alternative splicing of NRXN1 and NRXN3 in the laminin G-like domain 6 containing the evolutionary conserved neurexin alternative spliced segment 4 (AS4) involved in neurexin selective targeting to postsynaptic partners. In a neuronal activity-dependent manner cooperates synergistically with KHDRBS2/SLIM-1 in regulation of NRXN1 exon skipping at AS4. The cooperation with KHDRBS2/SLIM-1 is antagonistic for regulation of NXRN3 alternative splicing at AS4. The chain is KH domain-containing, RNA-binding, signal transduction-associated protein 1 from Rattus norvegicus (Rat).